The chain runs to 380 residues: Queuine tRNA-ribosyltransferase (380 aa).

Asp96 functions as the Proton acceptor in the catalytic mechanism. Residues 96 to 100 (DSGGF), Asp150, Gln193, and Gly220 each bind substrate. The interval 251–257 (GVGAPDS) is RNA binding. The Nucleophile role is filled by Asp270. The segment at 275-279 (TRIAR) is RNA binding; important for wobble base 34 recognition. Residues Cys308, Cys310, Cys313, and His339 each contribute to the Zn(2+) site.

The protein belongs to the queuine tRNA-ribosyltransferase family. As to quaternary structure, homodimer. Within each dimer, one monomer is responsible for RNA recognition and catalysis, while the other monomer binds to the replacement base PreQ1. Zn(2+) is required as a cofactor.

The catalysed reaction is 7-aminomethyl-7-carbaguanine + guanosine(34) in tRNA = 7-aminomethyl-7-carbaguanosine(34) in tRNA + guanine. The protein operates within tRNA modification; tRNA-queuosine biosynthesis. In terms of biological role, catalyzes the base-exchange of a guanine (G) residue with the queuine precursor 7-aminomethyl-7-deazaguanine (PreQ1) at position 34 (anticodon wobble position) in tRNAs with GU(N) anticodons (tRNA-Asp, -Asn, -His and -Tyr). Catalysis occurs through a double-displacement mechanism. The nucleophile active site attacks the C1' of nucleotide 34 to detach the guanine base from the RNA, forming a covalent enzyme-RNA intermediate. The proton acceptor active site deprotonates the incoming PreQ1, allowing a nucleophilic attack on the C1' of the ribose to form the product. After dissociation, two additional enzymatic reactions on the tRNA convert PreQ1 to queuine (Q), resulting in the hypermodified nucleoside queuosine (7-(((4,5-cis-dihydroxy-2-cyclopenten-1-yl)amino)methyl)-7-deazaguanosine). The sequence is that of Queuine tRNA-ribosyltransferase from Streptococcus equi subsp. equi (strain 4047).